The primary structure comprises 79 residues: Exodeoxyribonuclease 7 small subunit (79 aa).

Belongs to the XseB family. In terms of assembly, heterooligomer composed of large and small subunits.

The protein resides in the cytoplasm. The catalysed reaction is Exonucleolytic cleavage in either 5'- to 3'- or 3'- to 5'-direction to yield nucleoside 5'-phosphates.. Bidirectionally degrades single-stranded DNA into large acid-insoluble oligonucleotides, which are then degraded further into small acid-soluble oligonucleotides. In Shouchella clausii (strain KSM-K16) (Alkalihalobacillus clausii), this protein is Exodeoxyribonuclease 7 small subunit.